Here is a 205-residue protein sequence, read N- to C-terminus: Small ribosomal subunit protein uS4 (205 aa).

Positions 1–16 (MSKRETTKYKIDRRMG) are enriched in basic and acidic residues. Residues 1 to 46 (MSKRETTKYKIDRRMGENIWGRPKSPVNRRDYGPGQHGQRRKGKLS) form a disordered region. The S4 RNA-binding domain occupies 94 to 157 (SRLDAVIYRA…KQLVLVLESV (64 aa)).

Belongs to the universal ribosomal protein uS4 family. As to quaternary structure, part of the 30S ribosomal subunit. Contacts protein S5. The interaction surface between S4 and S5 is involved in control of translational fidelity.

In terms of biological role, one of the primary rRNA binding proteins, it binds directly to 16S rRNA where it nucleates assembly of the body of the 30S subunit. Functionally, with S5 and S12 plays an important role in translational accuracy. The sequence is that of Small ribosomal subunit protein uS4 from Bartonella henselae (strain ATCC 49882 / DSM 28221 / CCUG 30454 / Houston 1) (Rochalimaea henselae).